Here is a 212-residue protein sequence, read N- to C-terminus: tRNA (guanine-N(7)-)-methyltransferase (212 aa).

4 residues coordinate S-adenosyl-L-methionine: Glu44, Asp69, Asp96, and Asp118. The active site involves Asp118. Lys122 contacts substrate. The segment at 124-129 (RHEKRR) is interaction with RNA. Residues Asp154 and 191-194 (TEYE) each bind substrate.

It belongs to the class I-like SAM-binding methyltransferase superfamily. TrmB family.

It catalyses the reaction guanosine(46) in tRNA + S-adenosyl-L-methionine = N(7)-methylguanosine(46) in tRNA + S-adenosyl-L-homocysteine. It functions in the pathway tRNA modification; N(7)-methylguanine-tRNA biosynthesis. Catalyzes the formation of N(7)-methylguanine at position 46 (m7G46) in tRNA. In Streptococcus sanguinis (strain SK36), this protein is tRNA (guanine-N(7)-)-methyltransferase.